Here is a 392-residue protein sequence, read N- to C-terminus: tRNA (guanine-N(7)-)-methyltransferase (392 aa).

S-adenosyl-L-methionine is bound by residues E123, E148, and D175. Positions 201 and 231 each coordinate substrate.

The protein belongs to the class I-like SAM-binding methyltransferase superfamily. TrmB family.

The enzyme catalyses guanosine(46) in tRNA + S-adenosyl-L-methionine = N(7)-methylguanosine(46) in tRNA + S-adenosyl-L-homocysteine. The protein operates within tRNA modification; N(7)-methylguanine-tRNA biosynthesis. Catalyzes the formation of N(7)-methylguanine at position 46 (m7G46) in tRNA. In Campylobacter jejuni subsp. doylei (strain ATCC BAA-1458 / RM4099 / 269.97), this protein is tRNA (guanine-N(7)-)-methyltransferase.